The primary structure comprises 917 residues: Nitrate reductase [NADH] 1 (917 aa).

Residues 62–81 (DSYDDSSSDDEDESHNRNVP) form a disordered region. Residues 63 to 74 (SYDDSSSDDEDE) are compositionally biased toward acidic residues. Cysteine 197 serves as a coordination point for Mo-molybdopterin. Residues 545–620 (SKMYSISEVR…LEDYRIGELI (76 aa)) enclose the Cytochrome b5 heme-binding domain. 2 residues coordinate heme: histidine 580 and histidine 603. The region spanning 660–772 (REKIPVRLIE…KGPLGHIEYK (113 aa)) is the FAD-binding FR-type domain. FAD is bound by residues 712–715 (RAYT), 729–733 (VVKVY), phenylalanine 734, phenylalanine 741, 746–748 (LMS), and threonine 799.

This sequence belongs to the nitrate reductase family. Homodimer. FAD is required as a cofactor. The cofactor is heme. Mo-molybdopterin serves as cofactor. In terms of tissue distribution, root, leaf, and shoot.

It carries out the reaction nitrite + NAD(+) + H2O = nitrate + NADH + H(+). In terms of biological role, nitrate reductase is a key enzyme involved in the first step of nitrate assimilation in plants, fungi and bacteria. This is Nitrate reductase [NADH] 1 (NIA1) from Arabidopsis thaliana (Mouse-ear cress).